Consider the following 488-residue polypeptide: Glutamyl-tRNA(Gln) amidotransferase subunit A (488 aa).

Active-site charge relay system residues include K77 and S152. S176 acts as the Acyl-ester intermediate in catalysis.

The protein belongs to the amidase family. GatA subfamily. Heterotrimer of A, B and C subunits.

It catalyses the reaction L-glutamyl-tRNA(Gln) + L-glutamine + ATP + H2O = L-glutaminyl-tRNA(Gln) + L-glutamate + ADP + phosphate + H(+). Allows the formation of correctly charged Gln-tRNA(Gln) through the transamidation of misacylated Glu-tRNA(Gln) in organisms which lack glutaminyl-tRNA synthetase. The reaction takes place in the presence of glutamine and ATP through an activated gamma-phospho-Glu-tRNA(Gln). The protein is Glutamyl-tRNA(Gln) amidotransferase subunit A of Streptococcus mutans serotype c (strain ATCC 700610 / UA159).